A 78-amino-acid polypeptide reads, in one-letter code: RNA-binding protein Hfq (78 aa).

The Sm domain occupies Asp-10–Val-69.

This sequence belongs to the Hfq family. In terms of assembly, homohexamer.

Its function is as follows. RNA chaperone that binds small regulatory RNA (sRNAs) and mRNAs to facilitate mRNA translational regulation in response to envelope stress, environmental stress and changes in metabolite concentrations. Also binds with high specificity to tRNAs. The protein is RNA-binding protein Hfq of Bordetella avium (strain 197N).